A 375-amino-acid chain; its full sequence is MSKAFGLLRQTCQSILAESPQSPADLEEKKEEDSNMKREQPRERPRAWDYPHGLVGLHNIGQTCCLNSLIQVFVMNVDFARILKRITVPRGADEQRRSVPFQMLLLLEKMQDSRQKAVRPLELAYCLQKYNVPLFVQHDAAQLYLKLWNLMKDQITDVHLVERLQALYMIRMKDSLICLDCAMESSRNSSMLTLPLSLFDVDSKPLKTLVGQEDALHCFFQPRELSRKSKCFCENCGKKTHRKQVLKLTHFPQTLTIHLMRFSIRNSQTRKICHSLYFPQSLDFSQVLPTKQKSCDAEEQPGGQFELFAVIAHVGMADSGHYCVYIRNAVDGKWFCFNDSNICLVSWEDIQCTYGNPNYHWQETAYLLVYMKMEC.

Residues 18 to 45 (ESPQSPADLEEKKEEDSNMKREQPRERP) form a disordered region. Basic and acidic residues predominate over residues 26 to 45 (LEEKKEEDSNMKREQPRERP). Positions 55–373 (VGLHNIGQTC…TAYLLVYMKM (319 aa)) constitute a USP domain. The active-site Nucleophile is Cys-64. His-321 acts as the Proton acceptor in catalysis.

The protein belongs to the peptidase C19 family. Interacts with STAT2; the interaction is direct. Interacts with IFNAR2; indirectly via STAT2, it negatively regulates the assembly of the ternary interferon-IFNAR1-IFNAR2 complex and inhibits type I interferon signaling. Interacts with STING1. Interacts with USP20.

It catalyses the reaction Thiol-dependent hydrolysis of ester, thioester, amide, peptide and isopeptide bonds formed by the C-terminal Gly of ubiquitin (a 76-residue protein attached to proteins as an intracellular targeting signal).. Interferon-induced ISG15-specific protease that plays a crucial role for maintaining a proper balance of ISG15-conjugated proteins in cells. Regulates protein ISGylation by efficiently cleaving ISG15 conjugates linked via isopeptide bonds. Regulates T-cell activation and T-helper 17 (Th17) cell differentiation by deubiquitinating TAK1, likely to keep TAK1-TAB complexes in steady conditions. In turn, restricts activation of NF-kappa-B, NFAT, and JNK as well as expression of IL2 in T-cells after TCR activation. Acts as a molecular adapter with USP20 to promote innate antiviral response through deubiquitinating STING1. Involved also in the negative regulation of the inflammatory response triggered by type I interferon. Upon recruitment by STAT2 to the type I interferon receptor subunit IFNAR2 interferes with the assembly of the ternary interferon-IFNAR1-IFNAR2 complex and acts as a negative regulator of the type I interferon signaling pathway. The protein is Ubl carboxyl-terminal hydrolase 18 (USP18) of Pongo abelii (Sumatran orangutan).